A 204-amino-acid polypeptide reads, in one-letter code: FMN-dependent NADH:quinone oxidoreductase 1 (204 aa).

FMN-binding positions include Ser10 and 15 to 17 (SLS).

It belongs to the azoreductase type 1 family. In terms of assembly, homodimer. It depends on FMN as a cofactor.

It carries out the reaction 2 a quinone + NADH + H(+) = 2 a 1,4-benzosemiquinone + NAD(+). The catalysed reaction is N,N-dimethyl-1,4-phenylenediamine + anthranilate + 2 NAD(+) = 2-(4-dimethylaminophenyl)diazenylbenzoate + 2 NADH + 2 H(+). Its function is as follows. Quinone reductase that provides resistance to thiol-specific stress caused by electrophilic quinones. Functionally, also exhibits azoreductase activity. Catalyzes the reductive cleavage of the azo bond in aromatic azo compounds to the corresponding amines. The protein is FMN-dependent NADH:quinone oxidoreductase 1 of Rhizobium etli (strain ATCC 51251 / DSM 11541 / JCM 21823 / NBRC 15573 / CFN 42).